A 158-amino-acid chain; its full sequence is MQGRLSAWLVKHELVHRSLGFDYQGIETLQIKSEDWYSIAVISYVYGYNYLRSQCAYDVAPGGLLASVYHLTRIQYGVDQPEEVCIKVFAQRRNPRIPSVFWIWKSSDFQERESYDMLGIYYDNHPRLKRILMPESWIGWPLRKDYIAPNFYEIQDAH.

The protein belongs to the complex I 30 kDa subunit family. In terms of assembly, NDH is composed of at least 16 different subunits, 5 of which are encoded in the nucleus.

It localises to the plastid. The protein resides in the chloroplast thylakoid membrane. It carries out the reaction a plastoquinone + NADH + (n+1) H(+)(in) = a plastoquinol + NAD(+) + n H(+)(out). The enzyme catalyses a plastoquinone + NADPH + (n+1) H(+)(in) = a plastoquinol + NADP(+) + n H(+)(out). NDH shuttles electrons from NAD(P)H:plastoquinone, via FMN and iron-sulfur (Fe-S) centers, to quinones in the photosynthetic chain and possibly in a chloroplast respiratory chain. The immediate electron acceptor for the enzyme in this species is believed to be plastoquinone. Couples the redox reaction to proton translocation, and thus conserves the redox energy in a proton gradient. This is NAD(P)H-quinone oxidoreductase subunit J, chloroplastic from Amborella trichopoda.